We begin with the raw amino-acid sequence, 168 residues long: Gastrula zinc finger protein XlCGF7.1 (168 aa).

6 consecutive C2H2-type zinc fingers follow at residues 6 to 28, 34 to 56, 62 to 84, 90 to 112, 118 to 140, and 146 to 168; these read FTCT…QRTH, FTCT…LKCH, FMCT…RKIH, YICT…QTVH, FTCS…QKIH, and FKCN…ERIH.

Belongs to the krueppel C2H2-type zinc-finger protein family.

Its subcellular location is the nucleus. Functionally, may be involved in transcriptional regulation. In Xenopus laevis (African clawed frog), this protein is Gastrula zinc finger protein XlCGF7.1.